The sequence spans 143 residues: Large ribosomal subunit protein uL11 (143 aa).

This sequence belongs to the universal ribosomal protein uL11 family. Part of the ribosomal stalk of the 50S ribosomal subunit. Interacts with L10 and the large rRNA to form the base of the stalk. L10 forms an elongated spine to which L12 dimers bind in a sequential fashion forming a multimeric L10(L12)X complex. Post-translationally, one or more lysine residues are methylated.

In terms of biological role, forms part of the ribosomal stalk which helps the ribosome interact with GTP-bound translation factors. In Chromohalobacter salexigens (strain ATCC BAA-138 / DSM 3043 / CIP 106854 / NCIMB 13768 / 1H11), this protein is Large ribosomal subunit protein uL11.